The sequence spans 1837 residues: AF4/FMR2 family member lilli (1837 aa).

Disordered stretches follow at residues 1 to 25 (MAQQ…QQQQ), 65 to 109 (NLYS…PRRL), 162 to 295 (IQQQ…LHNG), 455 to 592 (QQLP…KKKY), 605 to 712 (TGLL…PGNV), 797 to 852 (PKSQ…LQIP), 868 to 1250 (NNMQ…GGAK), 1267 to 1311 (QQQQ…GLAS), and 1344 to 1466 (APSS…DPML). A compositionally biased stretch (low complexity) spans 16 to 25 (HQQQQQQQQQ). A compositionally biased stretch (basic and acidic residues) spans 84 to 109 (REKYERQQGIQSDDRETSLFSEPRRL). Composition is skewed to low complexity over residues 162-179 (IQQQ…VASS), 187-200 (QTQQ…QQQQ), and 247-264 (NSNS…SSSS). The residue at position 468 (T468) is a Phosphothreonine. Positions 475–488 (LKIEKNPILEKQDS) are enriched in basic and acidic residues. The segment covering 490–500 (LENDLELSESE) has biased composition (acidic residues). A phosphoserine mark is found at S497 and S499. 2 stretches are compositionally biased toward low complexity: residues 509–529 (SPGS…SESS) and 542–552 (QQQQQTQQQQL). Residues 553-563 (HGHHPQSHHHQ) are compositionally biased toward basic residues. Positions 564-583 (QFLQQQLQRQQQQQQQQQQL) are enriched in low complexity. Composition is skewed to gly residues over residues 612-633 (GGLG…GNGG) and 641-673 (GSMG…GIGS). Composition is skewed to polar residues over residues 678 to 690 (NKTP…NKWN) and 698 to 711 (PTSQ…SPGN). Residues 815–837 (SESATSGSSSSSCSSSDSAASAS) are compositionally biased toward low complexity. The span at 868 to 880 (NNMQKSQSMSVTV) shows a compositional bias: polar residues. Basic residues predominate over residues 892 to 902 (PRQKKPRKKKM). Residues S913 and S914 each carry the phosphoserine modification. Low complexity-rich tracts occupy residues 927-951 (VVAQ…ATTT) and 961-1013 (QQQQ…SSVL). The a.T hook DNA-binding region spans 952 to 964 (KKGRGRPRKQQQQ). S974 and S976 each carry phosphoserine. The span at 1021-1033 (SQSSSNGNTPTKK) shows a compositional bias: polar residues. 4 stretches are compositionally biased toward low complexity: residues 1034-1049 (MSSI…SAAA), 1056-1091 (AVAA…SSSS), 1130-1139 (GSSSPTSSSS), and 1157-1173 (ISNS…VNNN). Residues 1174 to 1184 (LQQQAMPQQSP) show a composition bias toward polar residues. A compositionally biased stretch (low complexity) spans 1189–1212 (LSGGSQQLSSSDSSSSSSGSSSSS). Basic and acidic residues predominate over residues 1217-1234 (DAKREKNRERKPKSDKNK). The segment covering 1267–1276 (QQQQQQQQVQ) has biased composition (low complexity). The segment covering 1345–1355 (PSSSNQQNGHL) has biased composition (polar residues). Basic residues predominate over residues 1373–1386 (KVKHEHHQLHHHSQ). Composition is skewed to basic and acidic residues over residues 1393-1407 (VKPE…ETKF) and 1416-1432 (FQLK…ERDQ). Position 1517 is a phosphoserine (S1517). Polar residues predominate over residues 1550–1560 (AVQTTPPTSVT). Disordered regions lie at residues 1550–1571 (AVQT…LVSQ) and 1727–1756 (GNTP…IVPQ). A compositionally biased stretch (low complexity) spans 1727–1747 (GNTPSSISPSNSVGSQGSGSN).

This sequence belongs to the AF4 family.

It localises to the nucleus. Its function is as follows. Has a role in transcriptional regulation. Acts in parallel with the Ras/MAPK and the PI3K/PKB pathways in the control of cell identity and cellular growth. Essential for regulation of the cytoskeleton and cell growth but not for cell proliferation or growth rate. Required specifically for the microtubule-based basal transport of lipid droplets. Plays a partially redundant function downstream of Raf in cell fate specification in the developing eye. Pair-rule protein that regulates embryonic cellularization, gastrulation and segmentation. The polypeptide is AF4/FMR2 family member lilli (Drosophila willistoni (Fruit fly)).